Reading from the N-terminus, the 636-residue chain is Endoglucanase 4 (636 aa).

The first 25 residues, Met-1–Met-25, serve as a signal peptide directing secretion. The active-site Nucleophile is Asp-82. Residues His-400, Asp-438, and Glu-447 contribute to the active site. The 158-residue stretch at Lys-478–Asn-635 folds into the CBM3 domain.

Belongs to the glycosyl hydrolase 9 (cellulase E) family.

The protein localises to the secreted. It catalyses the reaction Endohydrolysis of (1-&gt;4)-beta-D-glucosidic linkages in cellulose, lichenin and cereal beta-D-glucans.. This is Endoglucanase 4 from Bacillus sp. (strain KSM-522).